Consider the following 706-residue polypeptide: Elongation factor G (706 aa).

Positions 12–288 (EKTRNIGIMA…GVTNYLPSPN (277 aa)) constitute a tr-type G domain. GTP contacts are provided by residues 21 to 28 (AHIDAGKT), 85 to 89 (DTPGH), and 139 to 142 (NKMD). The disordered stretch occupies residues 288–309 (NDVPAITGHHPQDKEEDITRHP). Basic and acidic residues predominate over residues 297-309 (HPQDKEEDITRHP).

This sequence belongs to the TRAFAC class translation factor GTPase superfamily. Classic translation factor GTPase family. EF-G/EF-2 subfamily.

It localises to the cytoplasm. Its function is as follows. Catalyzes the GTP-dependent ribosomal translocation step during translation elongation. During this step, the ribosome changes from the pre-translocational (PRE) to the post-translocational (POST) state as the newly formed A-site-bound peptidyl-tRNA and P-site-bound deacylated tRNA move to the P and E sites, respectively. Catalyzes the coordinated movement of the two tRNA molecules, the mRNA and conformational changes in the ribosome. This chain is Elongation factor G, found in Salinibacter ruber (strain DSM 13855 / M31).